A 251-amino-acid chain; its full sequence is 5-oxoprolinase subunit A 2 (251 aa).

The protein belongs to the LamB/PxpA family. Forms a complex composed of PxpA, PxpB and PxpC.

It catalyses the reaction 5-oxo-L-proline + ATP + 2 H2O = L-glutamate + ADP + phosphate + H(+). In terms of biological role, catalyzes the cleavage of 5-oxoproline to form L-glutamate coupled to the hydrolysis of ATP to ADP and inorganic phosphate. This is 5-oxoprolinase subunit A 2 from Pseudomonas syringae pv. tomato (strain ATCC BAA-871 / DC3000).